The chain runs to 161 residues: MMRLLLLPLFLFTLSMACMGQTFQYSRGWTNGKRALTPPSLLSHGHFNRASDLGFSDLYDVQDWSSERRLERCLAQLQRSLLSRVYGSVVDFNANRPEPDSSDSGSSRNRANNNNENVLYPTPIQNRHHSSNELLEEISAAVAGSGPTGAGSGEPSVFGKH.

An N-terminal signal peptide occupies residues 1 to 20; that stretch reads MMRLLLLPLFLFTLSMACMG. Gln21 is subject to Pyrrolidone carboxylic acid. Residue Asn31 is modified to Asparagine amide. Positions 70–161 are excised as a propeptide; sequence LERCLAQLQR…SGEPSVFGKH (92 aa). Disordered stretches follow at residues 93–125 and 142–161; these read NANR…TPIQ and VAGS…FGKH. Residues 102–117 show a composition bias toward low complexity; the sequence is SDSGSSRNRANNNNEN.

This sequence belongs to the corazonin family.

It localises to the secreted. Cardioactive peptide. Corazonin is probably involved in the physiological regulation of the heart beat. Clock (Clk) and cycle (cyc) proteins negatively regulate Crz transcription in a cell-specific manner. The chain is Pro-corazonin from Drosophila pseudoobscura pseudoobscura (Fruit fly).